The primary structure comprises 428 residues: Adenylosuccinate synthetase (428 aa).

Residues 12 to 18 and 40 to 42 each bind GTP; these read GDEGKGK and GHT. The active-site Proton acceptor is Asp-13. Residues Asp-13 and Gly-40 each contribute to the Mg(2+) site. Residues 13–16, 38–41, Thr-128, Arg-142, Gln-223, Thr-238, and Arg-302 contribute to the IMP site; these read DEGK and NAGH. The active-site Proton donor is the His-41. 298–304 is a binding site for substrate; that stretch reads VTTKRPR. GTP contacts are provided by residues Arg-304, 330–332, and 412–414; these read KLD and GVG.

The protein belongs to the adenylosuccinate synthetase family. Homodimer. It depends on Mg(2+) as a cofactor.

It localises to the cytoplasm. It catalyses the reaction IMP + L-aspartate + GTP = N(6)-(1,2-dicarboxyethyl)-AMP + GDP + phosphate + 2 H(+). The protein operates within purine metabolism; AMP biosynthesis via de novo pathway; AMP from IMP: step 1/2. In terms of biological role, plays an important role in the de novo pathway of purine nucleotide biosynthesis. Catalyzes the first committed step in the biosynthesis of AMP from IMP. In Cutibacterium acnes (strain DSM 16379 / KPA171202) (Propionibacterium acnes), this protein is Adenylosuccinate synthetase.